A 311-amino-acid chain; its full sequence is Heme A synthase (311 aa).

Residues 1–6 (MQRFIK) lie on the Cytoplasmic side of the membrane. Residues 7 to 27 (WLAVITSLDLLVVLLGGALVT) form a helical membrane-spanning segment. Topologically, residues 28-62 (KTGSGQGCGKSWPLCNGEFVPSNLSMETIIELSHR) are extracellular. A disulfide bridge links C35 with C42. Residue E58 is part of the active site. Heme o is bound at residue H61. A helical transmembrane segment spans residues 63 to 83 (LTSGSAGILVTLLCILSWKYY). At 84–91 (KHVRETKT) the chain is on the cytoplasmic side. Residues 92-112 (LAILSFVFLVAQALMGAAAVV) form a helical membrane-spanning segment. At 113–121 (WGQMPAVLA) the chain is on the extracellular side. Residues 122-142 (IHFGISLISFASVILLTCLIF) form a helical membrane-spanning segment. H123 serves as a coordination point for heme o. The Cytoplasmic segment spans residues 143–159 (EIDQKFDARSLIMDKKM). A helical transmembrane segment spans residues 160–180 (KFHIYGVTIYSYIVVYTGALV). Topologically, residues 181–211 (RHERATLACPDFPLCSKSRPMPTQLHEWVQM) are extracellular. The cysteines at positions 189 and 195 are disulfide-linked. A helical membrane pass occupies residues 212 to 232 (GHRVAAMLIFAWILYAMIIAI). H213 is a binding site for heme b. Topologically, residues 233–243 (RHYKQQRVVYW) are cytoplasmic. A helical transmembrane segment spans residues 244–264 (GWIISFILVTLQAIVGILVVF). At 265-271 (TNASLAM) the chain is on the extracellular side. A helical membrane pass occupies residues 272-292 (ALLHSLFISCLFAVLCYLVMI). Position 275 (H275) interacts with heme b. At 293–311 (GTRSTVNAKETESTSKQTK) the chain is on the cytoplasmic side.

Belongs to the COX15/CtaA family. Type 1 subfamily. As to quaternary structure, interacts with CtaB. Requires heme b as cofactor.

The protein localises to the cell membrane. It carries out the reaction Fe(II)-heme o + 2 A + H2O = Fe(II)-heme a + 2 AH2. It functions in the pathway porphyrin-containing compound metabolism; heme A biosynthesis; heme A from heme O: step 1/1. Catalyzes the conversion of heme O to heme A by two successive hydroxylations of the methyl group at C8. The first hydroxylation forms heme I, the second hydroxylation results in an unstable dihydroxymethyl group, which spontaneously dehydrates, resulting in the formyl group of heme A. The polypeptide is Heme A synthase (Bacillus mycoides (strain KBAB4) (Bacillus weihenstephanensis)).